The sequence spans 469 residues: Phosphatidylinositol 4-kinase type 2-alpha (469 aa).

2 disordered regions span residues M1–P30 and T50–R72. Polar residues predominate over residues E16–P25. Over residues T50–G60 the composition is skewed to low complexity. The PI3K/PI4K catalytic domain occupies D115–T443. Residues I121 to G127 are G-loop. ATP-binding positions include S122–S128 and K143. The interval E148–Y150 is important for substrate binding. An important for interaction with membranes region spans residues K156–C169. Residues C165, C166, C168, and C169 are each lipidated (S-palmitoyl cysteine). Position 252 to 255 (Q252 to V255) interacts with ATP. Residues K259–R267 are important for interaction with membranes. The segment at R296–N304 is catalytic loop. Residues A334–F354 form an activation loop region. D336 serves as a coordination point for ATP. The interval W349–W358 is important for interaction with membranes.

Belongs to the PI3/PI4-kinase family. Type II PI4K subfamily.

The protein resides in the golgi apparatus. Its subcellular location is the trans-Golgi network membrane. It is found in the membrane raft. It localises to the endosome. The protein localises to the endosome membrane. The protein resides in the cytoplasmic vesicle. Its subcellular location is the cell projection. It is found in the dendrite. It localises to the presynaptic cell membrane. The protein localises to the synapse. The protein resides in the synaptosome. Its subcellular location is the mitochondrion. It is found in the membrane. It localises to the cell membrane. The protein localises to the perikaryon. The protein resides in the neuron projection. The catalysed reaction is a 1,2-diacyl-sn-glycero-3-phospho-(1D-myo-inositol) + ATP = a 1,2-diacyl-sn-glycero-3-phospho-(1D-myo-inositol 4-phosphate) + ADP + H(+). In terms of biological role, membrane-bound phosphatidylinositol-4 kinase (PI4-kinase) that catalyzes the phosphorylation of phosphatidylinositol (PI) to phosphatidylinositol 4-phosphate (PI4P), a lipid that plays important roles in endocytosis, Golgi function, protein sorting and membrane trafficking. Besides, phosphorylation of phosphatidylinositol (PI) to phosphatidylinositol 4-phosphate (PI4P) is the first committed step in the generation of phosphatidylinositol 4,5-bisphosphate (PIP2), a precursor of the second messenger inositol 1,4,5-trisphosphate (InsP3). The chain is Phosphatidylinositol 4-kinase type 2-alpha (pi4k2a) from Xenopus laevis (African clawed frog).